Consider the following 74-residue polypeptide: Translation initiation factor IF-1 (74 aa).

Residues 1–72 (MADTEKLKML…TRGRITYRHR (72 aa)) form the S1-like domain.

Belongs to the IF-1 family. As to quaternary structure, component of the 30S ribosomal translation pre-initiation complex which assembles on the 30S ribosome in the order IF-2 and IF-3, IF-1 and N-formylmethionyl-tRNA(fMet); mRNA recruitment can occur at any time during PIC assembly.

Its subcellular location is the cytoplasm. Functionally, one of the essential components for the initiation of protein synthesis. Stabilizes the binding of IF-2 and IF-3 on the 30S subunit to which N-formylmethionyl-tRNA(fMet) subsequently binds. Helps modulate mRNA selection, yielding the 30S pre-initiation complex (PIC). Upon addition of the 50S ribosomal subunit IF-1, IF-2 and IF-3 are released leaving the mature 70S translation initiation complex. The chain is Translation initiation factor IF-1 from Ureaplasma parvum serovar 3 (strain ATCC 700970).